We begin with the raw amino-acid sequence, 420 residues long: 20-oxo-5-O-mycaminosyltylactone 23-monooxygenase (420 aa).

Positions 1–28 (MSSSGDARPSQKGILLPAARANDTDEAA) are disordered. The heme site is built by His-118, Arg-122, Arg-311, His-367, and Cys-369.

It belongs to the cytochrome P450 family.

It carries out the reaction 20-oxo-5-O-beta-D-mycaminosyltylonolide + 2 reduced [2Fe-2S]-[ferredoxin] + O2 + 2 H(+) = 5-O-beta-D-mycaminosyltylonolide + 2 oxidized [2Fe-2S]-[ferredoxin] + H2O. The protein operates within antibiotic biosynthesis; tylosin biosynthesis. In terms of biological role, involved in the biosynthesis of the complex macrolide antibiotic tylosin. Catalyzes the hydroxylation of 20-oxo-5-O-beta-mycaminosyltylactone at the C-23 position to yield 5-O-beta-mycaminosyltylonolide. This is 20-oxo-5-O-mycaminosyltylactone 23-monooxygenase from Streptomyces fradiae (Streptomyces roseoflavus).